The primary structure comprises 808 residues: Envelope glycoprotein B (808 aa).

A signal peptide spans 1 to 19 (MVPNKHLLLIILSFSTACG). The Virion surface segment spans residues 20 to 701 (QTTPTTAVEK…TGILNFIKNP (682 aa)). Asparagine 30 carries an N-linked (GlcNAc...) asparagine; by host glycan. Intrachain disulfides connect cysteine 45–cysteine 498, cysteine 62–cysteine 454, cysteine 136–cysteine 201, cysteine 291–cysteine 338, and cysteine 520–cysteine 557. The tract at residues 101 to 107 (IFNGWTR) is involved in fusion and/or binding to host membrane. N-linked (GlcNAc...) asparagine; by host glycosylation occurs at asparagine 158. Positions 187 to 195 (GWLWGTYRT) are involved in fusion and/or binding to host membrane. N-linked (GlcNAc...) asparagine; by host glycosylation is found at asparagine 239, asparagine 251, asparagine 285, asparagine 331, asparagine 344, asparagine 355, asparagine 361, asparagine 532, asparagine 569, asparagine 587, and asparagine 598. 2 hydrophobic membrane proximal region regions span residues 647–699 (FDNS…NFIK) and 658–698 (IIQD…LNFI). The helical transmembrane segment at 702–722 (LGGMFTFLLIGAVIILVILLV) threads the bilayer. Topologically, residues 723-808 (RRTNNMSQAP…KQISTEDKIV (86 aa)) are intravirion.

Belongs to the herpesviridae glycoprotein B family. In terms of assembly, homotrimer; disulfide-linked. Binds to heparan sulfate proteoglycans. Interacts with gH/gL heterodimer. In terms of processing, a proteolytic cleavage by host furin generates two subunits that remain linked by disulfide bonds.

Its subcellular location is the virion membrane. It localises to the host cell membrane. It is found in the host endosome membrane. The protein localises to the host Golgi apparatus membrane. Its function is as follows. Envelope glycoprotein that forms spikes at the surface of virion envelope. Essential for the initial attachment to heparan sulfate moieties of the host cell surface proteoglycans. Involved in fusion of viral and cellular membranes leading to virus entry into the host cell. Following initial binding to its host receptors, membrane fusion is mediated by the fusion machinery composed at least of gB and the heterodimer gH/gL. May be involved in the fusion between the virion envelope and the outer nuclear membrane during virion egress. This Saimiriine herpesvirus 2 (strain 11) (SaHV-2) protein is Envelope glycoprotein B.